Consider the following 130-residue polypeptide: DNA-directed RNA polymerase subunit omega (130 aa).

The segment at 107–130 (SLDVSQESHDDEIDDQDSGEEVPI) is disordered. Residues 115 to 130 (HDDEIDDQDSGEEVPI) are compositionally biased toward acidic residues.

It belongs to the RNA polymerase subunit omega family. In terms of assembly, the RNAP catalytic core consists of 2 alpha, 1 beta, 1 beta' and 1 omega subunit. When a sigma factor is associated with the core the holoenzyme is formed, which can initiate transcription.

The enzyme catalyses RNA(n) + a ribonucleoside 5'-triphosphate = RNA(n+1) + diphosphate. Promotes RNA polymerase assembly. Latches the N- and C-terminal regions of the beta' subunit thereby facilitating its interaction with the beta and alpha subunits. The chain is DNA-directed RNA polymerase subunit omega from Wolbachia pipientis subsp. Culex pipiens (strain wPip).